Reading from the N-terminus, the 828-residue chain is Periplasmic nitrate reductase (828 aa).

Residues 1–33 (MKLSRRDFMKANAAVAAAAAAGLTIPTVVQAAA) constitute a signal peptide (tat-type signal). A 4Fe-4S Mo/W bis-MGD-type domain is found at 39-95 (IKWDKAPCRFCGTGCGVLVGTQNGRIVASQGDPEAAVNRGLSCIKGYFLPKIMYGKD). [4Fe-4S] cluster-binding residues include cysteine 46, cysteine 49, cysteine 53, and cysteine 81. Mo-bis(molybdopterin guanine dinucleotide) is bound by residues lysine 83, glutamine 150, asparagine 175, cysteine 179, 212–219 (WGSNMAEM), 243–247 (STFEH), 262–264 (QTD), methionine 372, glutamine 376, asparagine 482, 508–509 (SD), lysine 531, aspartate 558, and 718–727 (TGRVLEHWHT). Position 794 (phenylalanine 794) interacts with substrate. Residues asparagine 802 and lysine 819 each coordinate Mo-bis(molybdopterin guanine dinucleotide).

Belongs to the prokaryotic molybdopterin-containing oxidoreductase family. NasA/NapA/NarB subfamily. Component of the periplasmic nitrate reductase NapAB complex composed of NapA and NapB. Requires [4Fe-4S] cluster as cofactor. Mo-bis(molybdopterin guanine dinucleotide) serves as cofactor. In terms of processing, predicted to be exported by the Tat system. The position of the signal peptide cleavage has not been experimentally proven.

The protein resides in the periplasm. It carries out the reaction 2 Fe(II)-[cytochrome] + nitrate + 2 H(+) = 2 Fe(III)-[cytochrome] + nitrite + H2O. Its function is as follows. Catalytic subunit of the periplasmic nitrate reductase complex NapAB. Receives electrons from NapB and catalyzes the reduction of nitrate to nitrite. This chain is Periplasmic nitrate reductase, found in Serratia proteamaculans (strain 568).